Reading from the N-terminus, the 397-residue chain is Enoyl-[acyl-carrier-protein] reductase [NADH] (397 aa).

NAD(+) contacts are provided by residues 48–53 (GASTGY), 74–75 (FE), 111–112 (DA), and 139–140 (VA). Residue Tyr-225 participates in substrate binding. Tyr-235 acts as the Proton donor in catalysis. Residues Lys-244 and 273–275 (VVT) each bind NAD(+).

The protein belongs to the TER reductase family. As to quaternary structure, monomer.

The catalysed reaction is a 2,3-saturated acyl-[ACP] + NAD(+) = a (2E)-enoyl-[ACP] + NADH + H(+). It participates in lipid metabolism; fatty acid biosynthesis. Involved in the final reduction of the elongation cycle of fatty acid synthesis (FAS II). Catalyzes the reduction of a carbon-carbon double bond in an enoyl moiety that is covalently linked to an acyl carrier protein (ACP). This Burkholderia thailandensis (strain ATCC 700388 / DSM 13276 / CCUG 48851 / CIP 106301 / E264) protein is Enoyl-[acyl-carrier-protein] reductase [NADH].